Consider the following 447-residue polypeptide: Na(+)-translocating NADH-quinone reductase subunit A (447 aa).

Belongs to the NqrA family. Composed of six subunits; NqrA, NqrB, NqrC, NqrD, NqrE and NqrF.

It catalyses the reaction a ubiquinone + n Na(+)(in) + NADH + H(+) = a ubiquinol + n Na(+)(out) + NAD(+). Its function is as follows. NQR complex catalyzes the reduction of ubiquinone-1 to ubiquinol by two successive reactions, coupled with the transport of Na(+) ions from the cytoplasm to the periplasm. NqrA to NqrE are probably involved in the second step, the conversion of ubisemiquinone to ubiquinol. This chain is Na(+)-translocating NADH-quinone reductase subunit A, found in Neisseria gonorrhoeae (strain NCCP11945).